A 71-amino-acid chain; its full sequence is Prokaryotic ubiquitin-like protein Pup (71 aa).

Residues 1–18 (MPEKDTGGQHRATRRTEE) are compositionally biased toward basic and acidic residues. The segment at 1–36 (MPEKDTGGQHRATRRTEEHDETIDEATATSDVQERR) is disordered. Residues 27 to 65 (TATSDVQERREKLDADVDAILDEIDDVLEENAEEFVRSY) are ARC ATPase binding. A coiled-coil region spans residues 30 to 59 (SDVQERREKLDADVDAILDEIDDVLEENAE). Glu-71 participates in a covalent cross-link: Isoglutamyl lysine isopeptide (Glu-Lys) (interchain with K-? in acceptor proteins).

This sequence belongs to the prokaryotic ubiquitin-like protein family. As to quaternary structure, strongly interacts with the proteasome-associated ATPase ARC through a hydrophobic interface; the interacting region of Pup lies in its C-terminal half. There is one Pup binding site per ARC hexamer ring.

It functions in the pathway protein degradation; proteasomal Pup-dependent pathway. Functionally, protein modifier that is covalently attached to lysine residues of substrate proteins, thereby targeting them for proteasomal degradation. The tagging system is termed pupylation. The polypeptide is Prokaryotic ubiquitin-like protein Pup (Acidothermus cellulolyticus (strain ATCC 43068 / DSM 8971 / 11B)).